Reading from the N-terminus, the 622-residue chain is Basic helix-loop-helix ARNT-like protein 2 (622 aa).

A compositionally biased stretch (low complexity) spans 1–10; the sequence is MAEAGVGSAE. Disordered regions lie at residues 1 to 29 and 41 to 86; these read MAEA…DGNS and PITK…EDEE. A compositionally biased stretch (polar residues) spans 45–54; it reads PATTSFNNSV. The segment covering 67-76 has biased composition (acidic residues); sequence DNQDTVEVDG. Residues 77 to 86 show a composition bias toward basic and acidic residues; the sequence is DPQKRNEDEE. One can recognise a bHLH domain in the interval 92–145; the sequence is DFREAHSQTEKRRRDKMNNLIEELSAMIPQCNPMARKLDKLTVLRMAVQHLKSL. 2 consecutive PAS domains span residues 163-235 and 342-412; these read KDDE…DVSP and VPQK…LQNK. Residues 417–460 form the PAC domain; the sequence is TNSYKFRAKDGSFITLKSQWFSFMNPWTKELEYIVSNNTVVLGH.

Component of the circadian core oscillator, which includes the CRY proteins, CLOCK, or NPAS2, BMAL1 or BMAL2, CSNK1D and/or CSNK1E, TIMELESS and the PER proteins. Interacts directly with CLOCK to form the BMAL2-CLOCK transactivator. Can form heterodimers or homodimers which interact directly with CLOCK to form the transcription activator. In terms of tissue distribution, expressed in the pineal gland.

The protein resides in the nucleus. Its function is as follows. Transcriptional activator which forms a core component of the circadian clock. The circadian clock, an internal time-keeping system, regulates various physiological processes through the generation of approximately 24 hour circadian rhythms in gene expression, which are translated into rhythms in metabolism and behavior. It is derived from the Latin roots 'circa' (about) and 'diem' (day) and acts as an important regulator of a wide array of physiological functions including metabolism, sleep, body temperature, blood pressure, endocrine, immune, cardiovascular, and renal function. Consists of two major components: the central clock, residing in the suprachiasmatic nucleus (SCN) of the brain, and the peripheral clocks that are present in nearly every tissue and organ system. Both the central and peripheral clocks can be reset by environmental cues, also known as Zeitgebers (German for 'timegivers'). The predominant Zeitgeber for the central clock is light, which is sensed by retina and signals directly to the SCN. The central clock entrains the peripheral clocks through neuronal and hormonal signals, body temperature and feeding-related cues, aligning all clocks with the external light/dark cycle. Circadian rhythms allow an organism to achieve temporal homeostasis with its environment at the molecular level by regulating gene expression to create a peak of protein expression once every 24 hours to control when a particular physiological process is most active with respect to the solar day. Transcription and translation of core clock components (CLOCK, NPAS2, BMAL1, BMAL2, PER1, PER2, PER3, CRY1 and CRY2) plays a critical role in rhythm generation, whereas delays imposed by post-translational modifications (PTMs) are important for determining the period (tau) of the rhythms (tau refers to the period of a rhythm and is the length, in time, of one complete cycle). A diurnal rhythm is synchronized with the day/night cycle, while the ultradian and infradian rhythms have a period shorter and longer than 24 hours, respectively. Disruptions in the circadian rhythms contribute to the pathology of cardiovascular diseases, cancer, metabolic syndromes and aging. A transcription/translation feedback loop (TTFL) forms the core of the molecular circadian clock mechanism. Transcription factors, CLOCK or NPAS2 and BMAL1 or BMAL2, form the positive limb of the feedback loop, act in the form of a heterodimer and activate the transcription of core clock genes and clock-controlled genes (involved in key metabolic processes), harboring E-box elements (5'-CACGTG-3') within their promoters. The core clock genes: PER1/2/3 and CRY1/2 which are transcriptional repressors form the negative limb of the feedback loop and interact with the CLOCK|NPAS2-BMAL1|BMAL2 heterodimer inhibiting its activity and thereby negatively regulating their own expression. This heterodimer also activates nuclear receptors NR1D1/2 and RORA/B/G, which form a second feedback loop and which activate and repress BMAL1 transcription, respectively. The preferred binding motif for the CLOCK-BMAL1 heterodimer is 5'-CACGTGA-3', which contains a flanking adenine nucleotide at the 3-prime end of the canonical 6-nucleotide E-box sequence. CLOCK specifically binds to the half-site 5'-CAC-3', while BMAL1 binds to the half-site 5'-GTGA-3'. This Gallus gallus (Chicken) protein is Basic helix-loop-helix ARNT-like protein 2 (BMAL2).